A 399-amino-acid polypeptide reads, in one-letter code: Tyrosine--tRNA ligase 2 (399 aa).

Residues 41-50 (PTAPDLHLGH) carry the 'HIGH' region motif. The 'KMSKS' region signature appears at 225–229 (KMSKS). Lys228 is an ATP binding site. In terms of domain architecture, S4 RNA-binding spans 336 to 398 (ILIANLLKEA…GKRKFANITV (63 aa)).

The protein belongs to the class-I aminoacyl-tRNA synthetase family. TyrS type 2 subfamily. Homodimer.

It localises to the cytoplasm. The enzyme catalyses tRNA(Tyr) + L-tyrosine + ATP = L-tyrosyl-tRNA(Tyr) + AMP + diphosphate + H(+). Functionally, catalyzes the attachment of tyrosine to tRNA(Tyr) in a two-step reaction: tyrosine is first activated by ATP to form Tyr-AMP and then transferred to the acceptor end of tRNA(Tyr). In Pseudoalteromonas translucida (strain TAC 125), this protein is Tyrosine--tRNA ligase 2.